The following is a 229-amino-acid chain: Putative N-acetylmannosamine-6-phosphate 2-epimerase (229 aa).

It belongs to the NanE family.

It carries out the reaction an N-acyl-D-glucosamine 6-phosphate = an N-acyl-D-mannosamine 6-phosphate. It participates in amino-sugar metabolism; N-acetylneuraminate degradation; D-fructose 6-phosphate from N-acetylneuraminate: step 3/5. Functionally, converts N-acetylmannosamine-6-phosphate (ManNAc-6-P) to N-acetylglucosamine-6-phosphate (GlcNAc-6-P). This Escherichia coli O7:K1 (strain IAI39 / ExPEC) protein is Putative N-acetylmannosamine-6-phosphate 2-epimerase.